The following is a 315-amino-acid chain: Methionyl-tRNA formyltransferase (315 aa).

110–113 (SLLP) contacts (6S)-5,6,7,8-tetrahydrofolate.

This sequence belongs to the Fmt family.

It catalyses the reaction L-methionyl-tRNA(fMet) + (6R)-10-formyltetrahydrofolate = N-formyl-L-methionyl-tRNA(fMet) + (6S)-5,6,7,8-tetrahydrofolate + H(+). Its function is as follows. Attaches a formyl group to the free amino group of methionyl-tRNA(fMet). The formyl group appears to play a dual role in the initiator identity of N-formylmethionyl-tRNA by promoting its recognition by IF2 and preventing the misappropriation of this tRNA by the elongation apparatus. In Cutibacterium acnes (strain DSM 16379 / KPA171202) (Propionibacterium acnes), this protein is Methionyl-tRNA formyltransferase.